The primary structure comprises 386 residues: L-olivosyl-oleandolide 3-O-methyltransferase (386 aa).

Residues Ser166, 195–201 (EIGIGGY), Ser210, Asp227, 245–246 (RQ), and Asp268 contribute to the S-adenosyl-L-methionine site. Asp268 is a Mg(2+) binding site. His271 serves as the catalytic Proton acceptor. Mg(2+) contacts are provided by Glu296 and Asp297. The disordered stretch occupies residues 364-386 (RRAINKEGGIPHTVPREPFWNDN).

It belongs to the methyltransferase OleY/MycE family. Homodimer. Mg(2+) is required as a cofactor.

It catalyses the reaction L-olivosyl-oleandolide + S-adenosyl-L-methionine = L-oleandrosyl-oleandolide + S-adenosyl-L-homocysteine + H(+). The protein operates within antibiotic biosynthesis. 3-O-methyltransferase involved in the synthesis of L-oleandrose, a sugar attached to oleandomycin, a macrolide antibiotic. Acts on monoglycosylated macrolactones and mediates the conversion of L-olivosyl-erythronolide B into its 3-O-methylated derivative, L-oleandrosyl-erythronolide B. Also able to methylate other monoglycosylated derivatives, such as L-rhamnosyl- and L-mycarosyl-erythronolide B. The protein is L-olivosyl-oleandolide 3-O-methyltransferase (oleY) of Streptomyces antibioticus.